The sequence spans 505 residues: Deoxyguanosinetriphosphate triphosphohydrolase (505 aa).

Residues 66–273 (RLTHSMEVQQ…MEAADDISYC (208 aa)) enclose the HD domain.

This sequence belongs to the dGTPase family. Type 1 subfamily. As to quaternary structure, homotetramer. The cofactor is Mg(2+).

The catalysed reaction is dGTP + H2O = 2'-deoxyguanosine + triphosphate + H(+). DGTPase preferentially hydrolyzes dGTP over the other canonical NTPs. The polypeptide is Deoxyguanosinetriphosphate triphosphohydrolase (Serratia proteamaculans (strain 568)).